Reading from the N-terminus, the 987-residue chain is AP3-complex subunit beta-A (987 aa).

Residues 586-662 form a disordered region; the sequence is QDQLSDLDKQ…ISETSVSADQ (77 aa). The segment covering 603–613 has biased composition (acidic residues); sequence DGSEESSETGD. The span at 614–631 shows a compositional bias: low complexity; it reads ENGSSDYDSESSNGSDFS.

Belongs to the adaptor complexes large subunit family. In terms of assembly, adaptor protein complex 3 (AP-3) is a heterotetramer composed of two large adaptins (delta-type subunit and beta-type subunit), a medium adaptin (mu-type subunit) and a small adaptin (sigma-type subunit).

The protein localises to the cytoplasm. It localises to the golgi apparatus. The protein resides in the cytoplasmic vesicle membrane. Its function is as follows. Part of the AP-3 complex, an adaptor-related complex which seems to be clathrin-associated. The complex is associated with the Golgi region as well as more peripheral structures. It facilitates the budding of vesicles from the Golgi membrane and may be directly involved in trafficking to the vacuole. It also function in maintaining the identity of lytic vacuoles and in regulating the transition between storage and lytic vacuoles. This Arabidopsis thaliana (Mouse-ear cress) protein is AP3-complex subunit beta-A (AP3BA).